Consider the following 1256-residue polypeptide: Splicing factor, arginine/serine-rich 19 (1256 aa).

Disordered regions lie at residues 1 to 33 (MEEE…SPSA), 158 to 343 (GKTV…APRR), 371 to 395 (ALSL…PEEE), 408 to 1030 (PRQP…TLPP), 1112 to 1152 (GSLP…DKYL), and 1221 to 1256 (FRKH…LPPL). The span at 7-27 (SRGKTEESGEDRGDGPPDRDP) shows a compositional bias: basic and acidic residues. Residues 192 to 206 (SSASSSPSPSPSSSS) show a composition bias toward low complexity. Positions 207–222 (PSPPPPPPPPPPPALP) are enriched in pro residues. Residues 227–236 (DIYDPFHPTD) show a composition bias toward basic and acidic residues. Ser240 is modified (phosphoserine). The segment covering 255–265 (TGSNPSSSAGT) has biased composition (polar residues). Positions 268–282 (PEEEEEEEEEEEEEG) are enriched in acidic residues. Residue Thr328 is modified to Phosphothreonine. Acidic residues predominate over residues 382-393 (PEIEEGEIVQPE). Over residues 412-424 (PASVATLASVAAP) the composition is skewed to low complexity. A phosphoserine mark is found at Ser442 and Ser447. The segment covering 478-489 (KILTQRRERYRQ) has biased composition (basic residues). Ser491, Ser493, Ser510, Ser518, and Ser520 each carry phosphoserine. 2 stretches are compositionally biased toward basic residues: residues 538–553 (TARR…RSRS) and 560–577 (RGGH…RRRS). Ser577 and Ser579 each carry phosphoserine. Residues 592–611 (RERHRGKRREGGKKKKKRSR) are compositionally biased toward basic residues. Residues 612 to 623 (SRAEKRSGDLEK) show a composition bias toward basic and acidic residues. Position 663 is a phosphothreonine (Thr663). Phosphoserine is present on residues Ser676 and Ser682. Residue Tyr689 is modified to Phosphotyrosine. Phosphoserine occurs at positions 691 and 695. Basic and acidic residues-rich tracts occupy residues 696-709 (ADER…DRRR) and 719-741 (SREK…DRSS). Low complexity-rich tracts occupy residues 752–775 (PGSG…SCSS) and 793–804 (SSTTPAKDSSSS). Lys812 is covalently cross-linked (Glycyl lysine isopeptide (Lys-Gly) (interchain with G-Cter in SUMO2)). The segment covering 813–831 (FSRDRESRSPFLKPDERAP) has biased composition (basic and acidic residues). Phosphoserine is present on residues Ser819 and Ser821. Basic residues predominate over residues 843-875 (KPKKTKAKAKAGAKKAKGTKGKTKPSKTRKKVR). Phosphoserine occurs at positions 876, 883, 910, and 912. The span at 922-935 (STPPPKVAPPPPAL) shows a compositional bias: pro residues. Thr923 and Thr936 each carry phosphothreonine. Residues 938–947 (DSQTVDSSCK) are compositionally biased toward polar residues. Ser939 is subject to Phosphoserine. Thr948 is subject to Phosphothreonine. The span at 969 to 984 (EEEEEEEEEEEEEEEQ) shows a compositional bias: acidic residues. Low complexity predominate over residues 985-1017 (QPATTTATSTAAAAPSTAPSAGSTAGDSGAEDG). The interval 1131–1256 (PASDKREGSS…GGPGLPLPPL (126 aa)) is necessary for interaction with the CTD domain of POLR2A. Over residues 1133 to 1152 (SDKREGSSSSEGRGDTDKYL) the composition is skewed to basic and acidic residues. A compositionally biased stretch (pro residues) spans 1244 to 1256 (PDKGGPGLPLPPL).

This sequence belongs to the splicing factor SR family. As to quaternary structure, interacts with POLR2A.

The protein resides in the nucleus. May function in pre-mRNA splicing. In Mus musculus (Mouse), this protein is Splicing factor, arginine/serine-rich 19 (Scaf1).